Consider the following 1211-residue polypeptide: Transient receptor potential cation channel subfamily A member 1 homolog (1211 aa).

Residues 1 to 811 (MSKKSLGLDV…LKYKWNRLGR (811 aa)) lie on the Cytoplasmic side of the membrane. ANK repeat units follow at residues 49-79 (NLRS…AVNA), 83-112 (DFMT…LPNT), 116-169 (EGDT…EIDP), 173-202 (YQLT…DVDA), 206-235 (NKMT…NVTK), 239-270 (RLNT…AIKA), 277-306 (EKKT…KNSC), 311-340 (REKE…NKNE), 344-374 (VKAV…NIDV), 378-407 (QGLT…NLTI), 411-440 (DERT…KKNK), 473-502 (DQNT…SITQ), 506-535 (DEET…RLLL), 540-569 (MGNS…DKEA), 573-602 (YQKT…QIES), 605-634 (DTKT…TIDR), and 638-669 (EGKT…NLMI). The chain crosses the membrane as a helical span at residues 812–832 (PMYYFALFMYLVFIVSLTQYV). The Extracellular segment spans residues 833 to 870 (RHTKAPYNVWNEESYYDSEYFDENETCPQINTTKPDVV). N-linked (GlcNAc...) asparagine glycosylation is found at asparagine 856 and asparagine 863. A helical transmembrane segment spans residues 871–891 (WKIIIQTLAVCQILVECFQLF). At 892-894 (QRK) the chain is on the cytoplasmic side. The chain crosses the membrane as a helical span at residues 895–915 (FAYLVNWENWIDCFIYSTALI). The Extracellular portion of the chain corresponds to 916–932 (TVYDFSECSATSGVRQN). Residues 933-953 (WQWILAALCIFFGWINLLFMI) traverse the membrane as a helical segment. The Cytoplasmic portion of the chain corresponds to 954-975 (RKMPRFGIFVVMFVDIVKTFFR). A helical membrane pass occupies residues 976–996 (FFPVFVLFIIAFSSSFYVILQ). The Extracellular segment spans residues 997 to 1004 (NRPEFSTI). The segment at residues 1005-1025 (FMSPLKTTVMMIGEFEFTGIF) is an intramembrane region (pore-forming). Topologically, residues 1026-1048 (HGDETTHAEKMFGPAHTAVACAL) are extracellular. The chain crosses the membrane as a helical span at residues 1049-1069 (FFFFCIIMTILLMNLLVGLAV). Over 1070 to 1193 (DDIKGVQEKA…EKQVRLEAII (124 aa)) the chain is Cytoplasmic. Residues 1149-1191 (EMYEREAEFTSEMTQKLQNQAAKLKNIQENIDVMYEKQVRLEA) adopt a coiled-coil conformation.

This sequence belongs to the transient receptor (TC 1.A.4) family. Homotetramer. As to expression, expressed in many sensory neurons, including OLQ and IL1 neurons.

The protein resides in the cell membrane. Receptor-activated non-selective cation channel involved in the nose-touch response and foraging behavior. Contributes to the neural responses of sensory neurons to touch, particularly after repeated mechanical stimulation. Has no apparent role in thermosensory or chemosensory behaviors. The protein is Transient receptor potential cation channel subfamily A member 1 homolog (trpa-1) of Caenorhabditis elegans.